Reading from the N-terminus, the 185-residue chain is MMKFLLILIFLASFSFSLTPEEEKQLLKDIAEIKTTLKAFIREADERFEQVDKRFEDVNRRFEDFNRRLNDLREDMNKRFELVDKRFIELREDMNKRFELVDQRFEQLYTFLWIITGIFTTLTASVIAFAWWDRRTIIRKTKEETFEEMEKELKPEKFRKIMNALREKAKTDKELEAILKKYGLL.

2 helical membrane passes run 1–21 and 111–131; these read MMKF…LTPE and FLWI…AFAW.

This sequence to A.aeolicus aq_1900.

The protein localises to the cell membrane. This is an uncharacterized protein from Aquifex aeolicus (strain VF5).